The sequence spans 115 residues: Ribosome-binding factor A (115 aa).

It belongs to the RbfA family. In terms of assembly, monomer. Binds 30S ribosomal subunits, but not 50S ribosomal subunits or 70S ribosomes.

The protein localises to the cytoplasm. One of several proteins that assist in the late maturation steps of the functional core of the 30S ribosomal subunit. Associates with free 30S ribosomal subunits (but not with 30S subunits that are part of 70S ribosomes or polysomes). Required for efficient processing of 16S rRNA. May interact with the 5'-terminal helix region of 16S rRNA. The sequence is that of Ribosome-binding factor A from Bacillus velezensis (strain DSM 23117 / BGSC 10A6 / LMG 26770 / FZB42) (Bacillus amyloliquefaciens subsp. plantarum).